We begin with the raw amino-acid sequence, 384 residues long: ATP synthase subunit a (384 aa).

Positions 22-60 are disordered; the sequence is PAPAAAPVEQHGAPAPEAAAPDAHAAPAGEHGAAVEAHA. A run of 6 helical transmembrane segments spans residues 131–151, 189–209, 218–238, 258–278, 293–313, and 319–339; these read KHVM…LAAV, FVPY…FGLI, NLSV…YAAI, LAPL…TKPF, FVIL…VAFG, and LGIF…FTML. The disordered stretch occupies residues 355-384; it reads HGHAEEHGHAGPGMGSEHGSHVAGASPGHG.

This sequence belongs to the ATPase A chain family. As to quaternary structure, F-type ATPases have 2 components, CF(1) - the catalytic core - and CF(0) - the membrane proton channel. CF(1) has five subunits: alpha(3), beta(3), gamma(1), delta(1), epsilon(1). CF(0) has three main subunits: a(1), b(2) and c(9-12). The alpha and beta chains form an alternating ring which encloses part of the gamma chain. CF(1) is attached to CF(0) by a central stalk formed by the gamma and epsilon chains, while a peripheral stalk is formed by the delta and b chains.

The protein localises to the cell inner membrane. Key component of the proton channel; it plays a direct role in the translocation of protons across the membrane. The sequence is that of ATP synthase subunit a from Anaeromyxobacter dehalogenans (strain 2CP-1 / ATCC BAA-258).